A 424-amino-acid polypeptide reads, in one-letter code: 3-phosphoshikimate 1-carboxyvinyltransferase (424 aa).

Residues Lys-21, Ser-22, and Arg-26 each coordinate 3-phosphoshikimate. Residue Lys-21 coordinates phosphoenolpyruvate. Positions 92 and 120 each coordinate phosphoenolpyruvate. 3-phosphoshikimate contacts are provided by Ser-163, Ser-164, Gln-165, Ser-191, Asp-306, and Lys-333. Phosphoenolpyruvate is bound at residue Gln-165. The active-site Proton acceptor is the Asp-306. Positions 337, 379, and 405 each coordinate phosphoenolpyruvate.

The protein belongs to the EPSP synthase family. Monomer.

It is found in the cytoplasm. It carries out the reaction 3-phosphoshikimate + phosphoenolpyruvate = 5-O-(1-carboxyvinyl)-3-phosphoshikimate + phosphate. It participates in metabolic intermediate biosynthesis; chorismate biosynthesis; chorismate from D-erythrose 4-phosphate and phosphoenolpyruvate: step 6/7. Functionally, catalyzes the transfer of the enolpyruvyl moiety of phosphoenolpyruvate (PEP) to the 5-hydroxyl of shikimate-3-phosphate (S3P) to produce enolpyruvyl shikimate-3-phosphate and inorganic phosphate. The polypeptide is 3-phosphoshikimate 1-carboxyvinyltransferase (Clostridium perfringens (strain SM101 / Type A)).